The sequence spans 300 residues: MSIRSLGYLRIEATDMAAWREYGLKVLGMVEGKGAPEGALYLRMDDFPARLVVVPGEHDRLLEAGWECANAEGLQEIRNRLDLEGTPYKEATAAELADRRVDEMIRFADPSGNCLEVFHGTALEHRRVVSPYGHRFVTGEQGMGHVVLSTRDDAEALHFYRDVLGFRLRDSMRLPPQMVGRPADGPPAWLRFFGCNPRHHSLAFLPMPTSSGIVHLMVEVEQADDVGLCLDRALRRKVPMSATLGRHVNDLMLSFYMKTPGGFDIEFGCEGRQVDDRDWIARESTAVSLWGHDFTVGARG.

2 VOC domains span residues 5–120 and 142–270; these read SLGY…VFHG and GMGH…FGCE. Fe cation is bound at residue His145. 4 residues coordinate substrate: His200, His215, Asp250, and Tyr256. His215 provides a ligand contact to Fe cation. Glu266 is a Fe cation binding site.

Belongs to the extradiol ring-cleavage dioxygenase family. Homodimer, but may form a homooctamer. Fe(2+) serves as cofactor.

The enzyme catalyses 3,4-dihydroxy-9,10-secoandrosta-1,3,5(10)-triene-9,17-dione + O2 = (1E,2Z)-3-hydroxy-5,9,17-trioxo-4,5:9,10-disecoandrosta-1(10),2-dien-4-oate + H(+). It functions in the pathway steroid metabolism; cholesterol metabolism. In terms of biological role, catalyzes the meta-cleavage of 3,4-dihydroxy-9,10-seconandrost-1,3,5(10)-triene-9,17-dione (3,4-DHSA) to produce 4,5-9,10-diseco-3-hydroxy-5,9,17-trioxoandrosta-1(10),2-diene-4-oic acid (4,9-DSHA). In Mycobacterium tuberculosis (strain CDC 1551 / Oshkosh), this protein is Iron-dependent extradiol dioxygenase (hsaC).